The chain runs to 263 residues: Tryptophan synthase alpha chain (263 aa).

Residues Glu46 and Asp57 each act as proton acceptor in the active site.

This sequence belongs to the TrpA family. Tetramer of two alpha and two beta chains.

The enzyme catalyses (1S,2R)-1-C-(indol-3-yl)glycerol 3-phosphate + L-serine = D-glyceraldehyde 3-phosphate + L-tryptophan + H2O. It functions in the pathway amino-acid biosynthesis; L-tryptophan biosynthesis; L-tryptophan from chorismate: step 5/5. The alpha subunit is responsible for the aldol cleavage of indoleglycerol phosphate to indole and glyceraldehyde 3-phosphate. The protein is Tryptophan synthase alpha chain of Bacteroides fragilis (strain ATCC 25285 / DSM 2151 / CCUG 4856 / JCM 11019 / LMG 10263 / NCTC 9343 / Onslow / VPI 2553 / EN-2).